Consider the following 556-residue polypeptide: 2-succinyl-5-enolpyruvyl-6-hydroxy-3-cyclohexene-1-carboxylate synthase (556 aa).

The protein belongs to the TPP enzyme family. MenD subfamily. Homodimer. It depends on Mg(2+) as a cofactor. Requires Mn(2+) as cofactor. The cofactor is thiamine diphosphate.

It catalyses the reaction isochorismate + 2-oxoglutarate + H(+) = 5-enolpyruvoyl-6-hydroxy-2-succinyl-cyclohex-3-ene-1-carboxylate + CO2. The protein operates within quinol/quinone metabolism; 1,4-dihydroxy-2-naphthoate biosynthesis; 1,4-dihydroxy-2-naphthoate from chorismate: step 2/7. It functions in the pathway quinol/quinone metabolism; menaquinone biosynthesis. In terms of biological role, catalyzes the thiamine diphosphate-dependent decarboxylation of 2-oxoglutarate and the subsequent addition of the resulting succinic semialdehyde-thiamine pyrophosphate anion to isochorismate to yield 2-succinyl-5-enolpyruvyl-6-hydroxy-3-cyclohexene-1-carboxylate (SEPHCHC). The chain is 2-succinyl-5-enolpyruvyl-6-hydroxy-3-cyclohexene-1-carboxylate synthase from Salmonella gallinarum (strain 287/91 / NCTC 13346).